Reading from the N-terminus, the 181-residue chain is 6,7-dimethyl-8-ribityllumazine synthase (181 aa).

5-amino-6-(D-ribitylamino)uracil-binding positions include phenylalanine 23, serine 61 to glutamate 63, and alanine 85 to isoleucine 87. A (2S)-2-hydroxy-3-oxobutyl phosphate-binding site is contributed by glutamine 90–threonine 91. Histidine 93 acts as the Proton donor in catalysis. Phenylalanine 118 is a 5-amino-6-(D-ribitylamino)uracil binding site. Arginine 132 lines the (2S)-2-hydroxy-3-oxobutyl phosphate pocket.

The protein belongs to the DMRL synthase family.

It catalyses the reaction (2S)-2-hydroxy-3-oxobutyl phosphate + 5-amino-6-(D-ribitylamino)uracil = 6,7-dimethyl-8-(1-D-ribityl)lumazine + phosphate + 2 H2O + H(+). Its pathway is cofactor biosynthesis; riboflavin biosynthesis; riboflavin from 2-hydroxy-3-oxobutyl phosphate and 5-amino-6-(D-ribitylamino)uracil: step 1/2. Functionally, catalyzes the formation of 6,7-dimethyl-8-ribityllumazine by condensation of 5-amino-6-(D-ribitylamino)uracil with 3,4-dihydroxy-2-butanone 4-phosphate. This is the penultimate step in the biosynthesis of riboflavin. This is 6,7-dimethyl-8-ribityllumazine synthase from Synechococcus elongatus (strain ATCC 33912 / PCC 7942 / FACHB-805) (Anacystis nidulans R2).